The sequence spans 703 residues: Arf-GAP with GTPase, ANK repeat and PH domain-containing protein 9 (703 aa).

Disordered stretches follow at residues 249–287, 299–323, and 427–449; these read KRNG…TPTP, FTSE…TIGS, and SSTT…KHLK. Polar residues predominate over residues 271–286; it reads QEDPQFSVPPTANTPT. The segment covering 303-318 has biased composition (basic and acidic residues); sequence KGSDPDKERKAPENHA. Positions 327–488 constitute a PH domain; the sequence is IPIKQGMLLK…WVQAIQSQIL (162 aa). Residues 509–629 form the Arf-GAP domain; that stretch reads AMALQSIQNM…LFLAPLPCTE (121 aa). The C4-type zinc finger occupies 524–547; it reads CVDCETQNPKWASLNLGVLMCIEC. Residues 631–700 form an ANK repeat; sequence SLGQQLLRAT…WTSWPEMPTG (70 aa).

It belongs to the centaurin gamma-like family.

Functionally, putative GTPase-activating protein. The polypeptide is Arf-GAP with GTPase, ANK repeat and PH domain-containing protein 9 (AGAP9) (Homo sapiens (Human)).